Here is a 316-residue protein sequence, read N- to C-terminus: Fe-S cluster assembly protein dre2 (316 aa).

Residues 1–128 are N-terminal SAM-like domain; that stretch reads MAPRCLLIGT…KPEQEEPVSI (128 aa). Positions 129-208 are linker; sequence PLKFGKNKAN…EDDLITEADM (80 aa). Positions 141 to 177 are disordered; sequence SATNGTNGAVNPDGSVPLNLNRKRDQPEPVKPAGVGF. Residues Cys-218, Cys-229, Cys-232, and Cys-234 each coordinate [2Fe-2S] cluster. A fe-S binding site A region spans residues 218 to 234; sequence CQPKPGKRRRACKDCTC. Cys-279, Cys-282, Cys-290, and Cys-293 together coordinate [4Fe-4S] cluster. 2 consecutive short sequence motifs (cx2C motif) follow at residues 279-282 and 290-293; these read CGNC and CDGC. The tract at residues 279–293 is fe-S binding site B; that stretch reads CGNCALGDAFRCDGC.

It belongs to the anamorsin family. Monomer. Interacts with TAH18. Interacts with MIA40. It depends on [2Fe-2S] cluster as a cofactor. [4Fe-4S] cluster serves as cofactor.

Its subcellular location is the cytoplasm. It is found in the mitochondrion intermembrane space. In terms of biological role, component of the cytosolic iron-sulfur (Fe-S) protein assembly (CIA) machinery required for the maturation of extramitochondrial Fe-S proteins. Part of an electron transfer chain functioning in an early step of cytosolic Fe-S biogenesis, facilitating the de novo assembly of a [4Fe-4S] cluster on the scaffold complex CFD1-NBP35. Electrons are transferred to DRE2 from NADPH via the FAD- and FMN-containing protein TAH18. TAH18-DRE2 are also required for the assembly of the diferric tyrosyl radical cofactor of ribonucleotide reductase (RNR), probably by providing electrons for reduction during radical cofactor maturation in the catalytic small subunit RNR2. The polypeptide is Fe-S cluster assembly protein dre2 (Pyrenophora tritici-repentis (strain Pt-1C-BFP) (Wheat tan spot fungus)).